The following is a 461-amino-acid chain: V-type ATP synthase beta chain (461 aa).

Belongs to the ATPase alpha/beta chains family.

Produces ATP from ADP in the presence of a proton gradient across the membrane. The V-type beta chain is a regulatory subunit. The polypeptide is V-type ATP synthase beta chain (Clostridium botulinum (strain 657 / Type Ba4)).